The following is an 816-amino-acid chain: Ribonucleoside-diphosphate reductase large subunit (816 aa).

One can recognise an ATP-cone domain in the interval 1 to 92; that stretch reads MYVVKRDGRQ…VSNLHKNTKK (92 aa). ATP contacts are provided by residues 5 to 6, 11 to 17, Thr-53, and Asp-57; these read KR and ETVHFDK. 2 residues coordinate GDP: Ser-202 and Ser-217. Cysteines 218 and 444 form a disulfide. Residues 226–228, Lys-243, Arg-256, and 263–264 contribute to the dTTP site; these read DSI and RG. Residue Asn-427 participates in GDP binding. Asn-427 functions as the Proton acceptor in the catalytic mechanism. The active-site Cysteine radical intermediate is Cys-429. Residues Glu-431 and 623–626 contribute to the GDP site; that span reads TAST. The active-site Proton acceptor is Glu-431.

The protein belongs to the ribonucleoside diphosphate reductase large chain family. As to quaternary structure, heterotetramer of two large/R1 and two small/R2 subunits. A radical transfer pathway may occur between 'Tyr-125' of protein R2 and R1. In terms of processing, contains a disulfide bonds. Binding of the substrate occurs primarily when the active-site cysteines are reduced. As to expression, highly expressed in actively growing tissues such as young leaves, shoot apices, inflorescences and carpels. Very low expression in cotyledons, adult and cauline leaves and senescent leaves.

It localises to the cytoplasm. The catalysed reaction is a 2'-deoxyribonucleoside 5'-diphosphate + [thioredoxin]-disulfide + H2O = a ribonucleoside 5'-diphosphate + [thioredoxin]-dithiol. Under complex allosteric control mediated by deoxynucleoside triphosphates and ATP binding to separate specificity and activation sites on the large subunit. The type of nucleotide bound at the specificity site determines substrate preference. It seems probable that ATP makes the enzyme reduce CDP and UDP, dGTP favors ADP reduction and dTTP favors GDP reduction. Stimulated by ATP and inhibited by dATP binding to the activity site. Provides the precursors necessary for DNA synthesis. Catalyzes the biosynthesis of deoxyribonucleotides from the corresponding ribonucleotides. R1 contains the binding sites for both substrates and allosteric effectors and carries out the actual reduction of the ribonucleotide. Ribonucleotide reductase (RNR) complex function is essential for efficient organellar DNA degradation in pollen. Involved in chloroplast division. This chain is Ribonucleoside-diphosphate reductase large subunit, found in Arabidopsis thaliana (Mouse-ear cress).